The primary structure comprises 270 residues: 4-hydroxy-tetrahydrodipicolinate reductase (270 aa).

NAD(+)-binding positions include 9–14 (GAGGRM) and glutamate 35. Arginine 36 provides a ligand contact to NADP(+). NAD(+)-binding positions include 99-101 (GTT) and 123-126 (ASNY). Residue histidine 156 is the Proton donor/acceptor of the active site. A (S)-2,3,4,5-tetrahydrodipicolinate-binding site is contributed by histidine 157. Residue lysine 160 is the Proton donor of the active site. 166 to 167 (GT) provides a ligand contact to (S)-2,3,4,5-tetrahydrodipicolinate.

Belongs to the DapB family.

Its subcellular location is the cytoplasm. The catalysed reaction is (S)-2,3,4,5-tetrahydrodipicolinate + NAD(+) + H2O = (2S,4S)-4-hydroxy-2,3,4,5-tetrahydrodipicolinate + NADH + H(+). The enzyme catalyses (S)-2,3,4,5-tetrahydrodipicolinate + NADP(+) + H2O = (2S,4S)-4-hydroxy-2,3,4,5-tetrahydrodipicolinate + NADPH + H(+). Its pathway is amino-acid biosynthesis; L-lysine biosynthesis via DAP pathway; (S)-tetrahydrodipicolinate from L-aspartate: step 4/4. Its function is as follows. Catalyzes the conversion of 4-hydroxy-tetrahydrodipicolinate (HTPA) to tetrahydrodipicolinate. The protein is 4-hydroxy-tetrahydrodipicolinate reductase of Histophilus somni (strain 129Pt) (Haemophilus somnus).